The primary structure comprises 356 residues: Serpentine receptor class epsilon-29 (356 aa).

7 helical membrane-spanning segments follow: residues 29–49 (IVEL…IYII), 61–81 (ILAI…LITI), 119–139 (LLIF…FGVL), 161–181 (LFIP…TSLA), 190–210 (FLAQ…YFFV), 251–271 (LVFV…ALFY), and 281–301 (FVEN…IFSV).

This sequence belongs to the nematode receptor-like protein sre family.

The protein resides in the membrane. This chain is Serpentine receptor class epsilon-29 (sre-29), found in Caenorhabditis elegans.